A 343-amino-acid chain; its full sequence is D-beta-hydroxybutyrate dehydrogenase, mitochondrial (343 aa).

Residues 1–46 constitute a mitochondrion transit peptide; the sequence is MLAARLSRPLSQLPGKALSVCDRENGTRHTLLFYPASFSPDTRRTY. 59–83 contributes to the NAD(+) binding site; it reads LVTGCDSGFGFSLAKHLHSKGFLVF. Lys-73 is subject to N6-acetyllysine. The residue at position 103 (Lys-103) is an N6-acetyllysine; alternate. Lys-103 is subject to N6-succinyllysine; alternate. 2 positions are modified to N6-acetyllysine: Lys-132 and Lys-177. Ser-195 contacts substrate. Tyr-208 (proton acceptor) is an active-site residue. Position 212 is an N6-acetyllysine (Lys-212). Ser-219 carries O-linked (GlcNAc) serine glycosylation. The residue at position 246 (Ser-246) is a Phosphoserine. Lys-258 bears the N6-acetyllysine mark. Lys-259 bears the N6-acetyllysine; alternate mark. Lys-259 is subject to N6-succinyllysine; alternate. Lys-280 is subject to N6-acetyllysine.

Belongs to the short-chain dehydrogenases/reductases (SDR) family. In terms of assembly, homotetramer. In terms of tissue distribution, expressed in liver.

It localises to the mitochondrion inner membrane. It is found in the mitochondrion matrix. The catalysed reaction is (R)-3-hydroxybutanoate + NAD(+) = acetoacetate + NADH + H(+). With respect to regulation, requires phosphatidylcholine as an allosteric activator for enzymatic activity. The protein is D-beta-hydroxybutyrate dehydrogenase, mitochondrial of Rattus norvegicus (Rat).